The primary structure comprises 144 residues: Interferon-induced transmembrane protein 2 (144 aa).

N-acetylmethionine is present on methionine 1. The Cytoplasmic portion of the chain corresponds to 1–56 (MSHNSQAFLSTNAGLPPSYETIKEEYGVTELGEPSNSAVVRTTVINMPREVSVPDH). Phosphotyrosine is present on tyrosine 19. An intramembrane region (helical) is located at residues 57-77 (VVWSLFNTLFFNACCLGFVAY). Residues cysteine 70, cysteine 71, and cysteine 104 are each lipidated (S-palmitoyl cysteine). Residues 78–110 (AYSVKSRDRKMVGDVVGAQAYASTAKCLNISSL) lie on the Cytoplasmic side of the membrane. The chain crosses the membrane as a helical span at residues 111 to 131 (IFSILMVIICIIIFSTTSVVV). Residues 132-144 (FQSFAQRTPHSGF) are Extracellular-facing.

This sequence belongs to the CD225/Dispanin family. Interacts with CD81. Post-translationally, palmitoylation on membrane-proximal cysteines controls clustering in membrane compartments and antiviral activity. Phosphorylation at Tyr-19 is required for endosomal and lysosomal location. In terms of tissue distribution, predominantly expressed in nascent primordial germ cells, as well as in gonadal germ cells.

The protein localises to the cell membrane. The protein resides in the lysosome membrane. Its subcellular location is the late endosome membrane. Its function is as follows. IFN-induced antiviral protein which inhibits the entry of viruses to the host cell cytoplasm, permitting endocytosis, but preventing subsequent viral fusion and release of viral contents into the cytosol. Active against multiple viruses, including influenza A virus, SARS coronavirus (SARS-CoV), Marburg virus (MARV) and Ebola virus (EBOV), Dengue virus (DNV) and West Nile virus (WNV). Can inhibit: influenza virus hemagglutinin protein-mediated viral entry, MARV and EBOV GP1,2-mediated viral entry and SARS-CoV S protein-mediated viral entry. Induces cell cycle arrest and mediates apoptosis by caspase activation and in p53-independent manner. The chain is Interferon-induced transmembrane protein 2 (Ifitm2) from Mus musculus (Mouse).